The sequence spans 211 residues: Large ribosomal subunit protein bL25 (211 aa).

The protein belongs to the bacterial ribosomal protein bL25 family. CTC subfamily. As to quaternary structure, part of the 50S ribosomal subunit; part of the 5S rRNA/L5/L18/L25 subcomplex. Contacts the 5S rRNA. Binds to the 5S rRNA independently of L5 and L18.

In terms of biological role, this is one of the proteins that binds to the 5S RNA in the ribosome where it forms part of the central protuberance. The sequence is that of Large ribosomal subunit protein bL25 from Anaplasma phagocytophilum (strain HZ).